We begin with the raw amino-acid sequence, 119 residues long: Large ribosomal subunit protein bL20 (119 aa).

It belongs to the bacterial ribosomal protein bL20 family.

Its function is as follows. Binds directly to 23S ribosomal RNA and is necessary for the in vitro assembly process of the 50S ribosomal subunit. It is not involved in the protein synthesizing functions of that subunit. The polypeptide is Large ribosomal subunit protein bL20 (Thiobacillus denitrificans (strain ATCC 25259 / T1)).